Consider the following 258-residue polypeptide: F-box/SPRY domain-containing protein 1 (258 aa).

The F-box domain maps to 6–54 (TEYAPDIPDNVLELIFSYLKLQDLRNCALVCKSWHRFLSDENNEVWRAQ). Residues 64-256 (FKTDLLSVVP…ISMVYLGPPL (193 aa)) form the B30.2/SPRY domain.

It belongs to the FBXO45/Fsn family. Component of an E3 ubiquitin ligase complex composed of hiw and Fsn.

Its subcellular location is the synapse. The protein operates within protein modification; protein ubiquitination. In terms of biological role, required in the presynaptic motoneuron to down-regulate the levels of wnd and restrain synaptic terminal growth at the neuromuscular junction (NMJ). The protein is F-box/SPRY domain-containing protein 1 of Culex quinquefasciatus (Southern house mosquito).